A 50-amino-acid chain; its full sequence is Protease inhibitor 2 (50 aa).

Residues 2–50 form the Kazal-like domain; sequence EDCVGRKACTREWYPVCGSDGVTYSNPCNFSAQQEQCDPNITIAHMGEC. 2 disulfide bridges follow: Cys-10/Cys-29 and Cys-18/Cys-50. 2 N-linked (GlcNAc...) asparagine glycosylation sites follow: Asn-30 and Asn-41.

Its function is as follows. Serine protease inhibitor. Strongly inhibits human neutrophil elastase and trypsin, also inhibits porcine pancreatic elastase and subtilisin A. Does not inhibit chymotrypsin, plasma kallikrein, pancreatic kallikrein, thrombin or papain. This is Protease inhibitor 2 from Cenchritis muricatus (Beaded periwinkle).